A 213-amino-acid polypeptide reads, in one-letter code: MKIIGIDEAGKGPVIGPMCIGGVRIDEDKSNALKNLGVADSKKLSPKRRVHLAAQIKKYADGWFVYEVSPNQIDELRKLMSMNDIMVLAFGSVIEELPSDKIYADAADVKEERFGKRLFDNYMEKHPDVSPPEVISKHGADDLFPVVSAASILAKVRRDELIEKIKVDMGVDIGSGYPSDPKTKKFLENWYRENSSFPDIVRHSWKTAQKFIQ.

Positions 1-213 constitute an RNase H type-2 domain; sequence MKIIGIDEAG…SWKTAQKFIQ (213 aa). The a divalent metal cation site is built by aspartate 7, glutamate 8, and aspartate 105.

The protein belongs to the RNase HII family. The cofactor is Mn(2+). Mg(2+) serves as cofactor.

It is found in the cytoplasm. It carries out the reaction Endonucleolytic cleavage to 5'-phosphomonoester.. Functionally, endonuclease that specifically degrades the RNA of RNA-DNA hybrids. The chain is Ribonuclease HII from Methanococcoides burtonii (strain DSM 6242 / NBRC 107633 / OCM 468 / ACE-M).